The sequence spans 968 residues: Probable transport protein MmpL2 (968 aa).

Helical transmembrane passes span 22–42 (FAVVIVLLWLGFTAFVNLAVP), 204–224 (VIAAMLLVIYRSVITAVLVLI), 245–265 (IFSLSTFATNLLVLMAIAAST), 297–317 (AHVILGSGLTIAGAMYCLSFA), 328–348 (PIAIGMLVAVLAALTLGPAVL), 378–398 (WPGPVLAATCLVASIGLLALP), 763–783 (YDLLIAGVAAISLILIIMMII), 787–807 (VVAAVVIVGTVVLSMGASFGL), 815–835 (ILGIELYWMVLAMSVILLLAV), 866–886 (TGGVVTAAGMVFAVTMSLFVF), and 890–910 (RIIGQIGTTIGLGLLFDTLVV).

It belongs to the resistance-nodulation-cell division (RND) (TC 2.A.6) family. MmpL subfamily.

The protein localises to the cell membrane. This Mycobacterium tuberculosis (strain CDC 1551 / Oshkosh) protein is Probable transport protein MmpL2 (mmpL2).